A 417-amino-acid polypeptide reads, in one-letter code: Serine hydroxymethyltransferase (417 aa).

(6S)-5,6,7,8-tetrahydrofolate contacts are provided by residues Leu120 and 124–126 (GHL). Lys229 is modified (N6-(pyridoxal phosphate)lysine).

This sequence belongs to the SHMT family. As to quaternary structure, homodimer. Requires pyridoxal 5'-phosphate as cofactor.

The protein resides in the cytoplasm. The catalysed reaction is (6R)-5,10-methylene-5,6,7,8-tetrahydrofolate + glycine + H2O = (6S)-5,6,7,8-tetrahydrofolate + L-serine. The protein operates within one-carbon metabolism; tetrahydrofolate interconversion. Its pathway is amino-acid biosynthesis; glycine biosynthesis; glycine from L-serine: step 1/1. Functionally, catalyzes the reversible interconversion of serine and glycine with tetrahydrofolate (THF) serving as the one-carbon carrier. This reaction serves as the major source of one-carbon groups required for the biosynthesis of purines, thymidylate, methionine, and other important biomolecules. Also exhibits THF-independent aldolase activity toward beta-hydroxyamino acids, producing glycine and aldehydes, via a retro-aldol mechanism. The protein is Serine hydroxymethyltransferase of Anaeromyxobacter sp. (strain K).